The chain runs to 521 residues: Cysteine protease atg-4.2 (521 aa).

Positions 90 to 100 (MMGSIRPSSSS) are enriched in low complexity. The tract at residues 90–109 (MMGSIRPSSSSQDVHSTGEI) is disordered. Cysteine 203 (nucleophile) is an active-site residue. Active-site residues include aspartate 394 and histidine 396. The tract at residues 499–521 (PSYEREVSETEQAQADKHGFEML) is disordered.

The protein belongs to the peptidase C54 family.

The protein localises to the cytoplasm. The catalysed reaction is [protein]-C-terminal L-amino acid-glycyl-phosphatidylethanolamide + H2O = [protein]-C-terminal L-amino acid-glycine + a 1,2-diacyl-sn-glycero-3-phosphoethanolamine. In terms of biological role, cysteine protease required for autophagy. Cleaves the C-terminal amino acid of ATG8 family proteins lgg-1, to reveal a C-terminal glycine. Exposure of the glycine at the C-terminus is essential for ATG8 proteins conjugation to phosphatidylethanolamine (PE) and insertion to membranes, which is necessary for autophagy. Its cleavage activity is functionally redundant to atg-4.1, but it cleaves lgg-1 precursors less efficiently than atg-4.1. In contrast to atg-4.1, plays a more significant role in the later phases of autophagy and in addition has a role in autophagosome maturation. Acts redundantly with atg-4.1 to promote the lgg-1 delipidation to release the protein from membranes, which facilitates multiple events during macroautophagy. Regulates the accumulation of autophagic structures in neurons and is specifically, required for the maturation and elimination of autophagosomes from the synaptic region of AIY interneurons. This chain is Cysteine protease atg-4.2, found in Caenorhabditis elegans.